The following is a 123-amino-acid chain: Cholecystokinin A (123 aa).

Residues 1-20 (MYSGICICLLLAMLSASSKA) form the signal peptide. Residues 21-103 (HQSEDAVVTE…FDQPHRINDR (83 aa)) constitute a propeptide that is removed on maturation. Sulfotyrosine is present on tyrosine 105. Phenylalanine 111 carries the phenylalanine amide modification. Residues 115-123 (SAEEYEYSS) constitute a propeptide that is removed on maturation.

The protein belongs to the gastrin/cholecystokinin family. In terms of processing, the precursor is cleaved by proteases to produce a number of active cholecystokinins. In terms of tissue distribution, brain, gastrointestinal tract and lung.

The protein resides in the secreted. This Xenopus laevis (African clawed frog) protein is Cholecystokinin A (cck-a).